The following is a 313-amino-acid chain: ADP-L-glycero-D-manno-heptose-6-epimerase (313 aa).

NADP(+)-binding positions include 10–11, 31–32, Lys38, Lys53, 75–79, and Asn92; these read MI, DN, and EGACS. Catalysis depends on Tyr139, which acts as the Proton acceptor. Lys143 is a binding site for NADP(+). Residue Asn174 coordinates substrate. Val175 and Lys183 together coordinate NADP(+). Lys183 acts as the Proton acceptor in catalysis. Residues Ser185, His192, 206-209, Arg214, and Tyr277 contribute to the substrate site; that span reads FEGS.

Belongs to the NAD(P)-dependent epimerase/dehydratase family. HldD subfamily. Homopentamer. NADP(+) serves as cofactor.

It carries out the reaction ADP-D-glycero-beta-D-manno-heptose = ADP-L-glycero-beta-D-manno-heptose. It participates in nucleotide-sugar biosynthesis; ADP-L-glycero-beta-D-manno-heptose biosynthesis; ADP-L-glycero-beta-D-manno-heptose from D-glycero-beta-D-manno-heptose 7-phosphate: step 4/4. Catalyzes the interconversion between ADP-D-glycero-beta-D-manno-heptose and ADP-L-glycero-beta-D-manno-heptose via an epimerization at carbon 6 of the heptose. The sequence is that of ADP-L-glycero-D-manno-heptose-6-epimerase from Aliivibrio fischeri (strain ATCC 700601 / ES114) (Vibrio fischeri).